The following is a 928-amino-acid chain: MYKLNVISLIILTTCSGAAYASTPDFPQHHKTVFGTVTIEKTTADKMTIKQGSDKAQIDWKSFDIGQKKEVKFEQPNEHAVAYNRVIGGNASQIQGKLTANGKVYLANPNGVIITQGAEINVAGLLATTKDLERISENSNSYQFTRRTKDRQVLKEGLVLKDGQVVKEGQVINEGNITAQDFVVLNGDEVINKGNINVEKNSTINGKVYLSSGYNFTFTLPDSGISVALEDNTVQGIVKNEGSIKAGEITLSAKGRKQALDSLVMNNGVLEATKVSNKNGKVVLSADNVELNNESNIKGEIVTFGADVTSNKELKDNIKITSKTGSKVTSPKINFTGKSVNINGNFGREDSTTHYKDEFKKLNTEVNIDVPDNENIRIADIEDNTGTGTTGTGTSSFIQTGALSSLLANNGKVNLKGNNVNISGRIHIDSFRGSDSLLKLTNKGHIDINNADIHSKGRLFFITSLQNEEDFKSNITITDSKINLGNGAMGLGRSVDEKDYDNRWQKTEGSQRKKFDVKMSNVEFNQVDDVILAGGFEKVNLDKIVATGQTNFYIDGGVSRNGRKYEYGVLDLDKRTQLSELNQGRRRWGYYYDLELDMNRAYLYRFDLFATKNTGRSTIKDTEINISNSNINLKNGFVHLLAEKIKLDNSKIDITFDKDNSQDTLAQTNRLGMNGKVSMINSHIKIVGDEKEGISPTGTYATMFLIGELIGEKSSIFVKSHQGYTFKTDGNTKIAGKYSKEDLKITAINTGGRAAEEVLINGALGSADNDANIANMAFTIGDSANTKTTIENADITALAPNGGTAYLSSKDVEIEVKPNSNFTFFELPREKNLNQTKINGASTKLSERGFARLYDKINGVRASNLSAEQLNVTDASEKIINTKLVSSLDVEKLVSVAVCDAGNGCEEQQFGDKGNNTKVSVGELEAEQ.

Positions Met1–Ala21 are cleaved as a signal peptide. A run of 10 repeats spans residues Asn101 to Leu106, Lys149 to Leu154, Lys155 to Leu160, Lys161 to Val166, Lys167 to Ile172, Asn205 to Leu210, Asn279 to Leu284, Asn410 to Leu415, Asn635 to Leu640, and Asn674 to Met679. The interval Asn101–Met679 is 6 X 6 AA approximate repeats. Positions Lys149 to Ile172 are 4 X 6 AA approximate tandem repeats.

The protein localises to the secreted. In terms of biological role, binds heme/hemopexin complexes. In Haemophilus influenzae, this protein is Heme/hemopexin-binding protein (hxuA).